Here is a 90-residue protein sequence, read N- to C-terminus: Probable Fe(2+)-trafficking protein (90 aa).

It belongs to the Fe(2+)-trafficking protein family.

In terms of biological role, could be a mediator in iron transactions between iron acquisition and iron-requiring processes, such as synthesis and/or repair of Fe-S clusters in biosynthetic enzymes. The chain is Probable Fe(2+)-trafficking protein from Paraburkholderia xenovorans (strain LB400).